The following is a 355-amino-acid chain: Chorismate synthase (355 aa).

Arg46 contributes to the NADP(+) binding site. Residues 123–125, 233–234, Gly273, 288–292, and Arg314 each bind FMN; these read RAS, NG, and KPTPS.

This sequence belongs to the chorismate synthase family. Homotetramer. Requires FMNH2 as cofactor.

It catalyses the reaction 5-O-(1-carboxyvinyl)-3-phosphoshikimate = chorismate + phosphate. Its pathway is metabolic intermediate biosynthesis; chorismate biosynthesis; chorismate from D-erythrose 4-phosphate and phosphoenolpyruvate: step 7/7. In terms of biological role, catalyzes the anti-1,4-elimination of the C-3 phosphate and the C-6 proR hydrogen from 5-enolpyruvylshikimate-3-phosphate (EPSP) to yield chorismate, which is the branch point compound that serves as the starting substrate for the three terminal pathways of aromatic amino acid biosynthesis. This reaction introduces a second double bond into the aromatic ring system. In Campylobacter concisus (strain 13826), this protein is Chorismate synthase.